The following is a 159-amino-acid chain: Phosphopantetheine adenylyltransferase (159 aa).

Residue Thr-9 participates in substrate binding. ATP-binding positions include 9 to 10 and His-17; that span reads TF. Residues Lys-41, Leu-73, and Arg-87 each coordinate substrate. Residues 88–90, Glu-98, and 123–129 each bind ATP; these read GLR and YMFISAT.

The protein belongs to the bacterial CoaD family. In terms of assembly, homohexamer. Requires Mg(2+) as cofactor.

The protein resides in the cytoplasm. It catalyses the reaction (R)-4'-phosphopantetheine + ATP + H(+) = 3'-dephospho-CoA + diphosphate. The protein operates within cofactor biosynthesis; coenzyme A biosynthesis; CoA from (R)-pantothenate: step 4/5. Reversibly transfers an adenylyl group from ATP to 4'-phosphopantetheine, yielding dephospho-CoA (dPCoA) and pyrophosphate. This Nitrosomonas europaea (strain ATCC 19718 / CIP 103999 / KCTC 2705 / NBRC 14298) protein is Phosphopantetheine adenylyltransferase.